Here is a 290-residue protein sequence, read N- to C-terminus: Protease HtpX (290 aa).

The next 2 helical transmembrane spans lie at 4-24 (IMLF…TLKL) and 36-56 (GSLL…SLFI). Histidine 142 lines the Zn(2+) pocket. The active site involves glutamate 143. Histidine 146 provides a ligand contact to Zn(2+). The next 2 helical transmembrane spans lie at 150-170 (GDMV…MFFA) and 193-213 (FIAT…IVMW). A Zn(2+)-binding site is contributed by glutamate 219.

It belongs to the peptidase M48B family. It depends on Zn(2+) as a cofactor.

It localises to the cell inner membrane. This chain is Protease HtpX, found in Ectopseudomonas mendocina (strain ymp) (Pseudomonas mendocina).